A 300-amino-acid polypeptide reads, in one-letter code: Acetaldehyde dehydrogenase (300 aa).

11 to 14 (SGNI) provides a ligand contact to NAD(+). The active-site Acyl-thioester intermediate is the Cys129. Residues 160–168 (SVGPGTRQN) and Asn271 contribute to the NAD(+) site.

The protein belongs to the acetaldehyde dehydrogenase family.

It catalyses the reaction acetaldehyde + NAD(+) + CoA = acetyl-CoA + NADH + H(+). This is Acetaldehyde dehydrogenase (mhpF) from Pseudoalteromonas translucida (strain TAC 125).